The primary structure comprises 607 residues: MSRDSGNDSEVAVTHGEVQEITEENPEIGSMHITQETDISDAPETNTDSSRQRTESTTSVSSESWQNNDEMMSNLRRAQRLLDDGATPLQIIQQIFPDFNASRIATMSENAHFAILSDLLERAPVRQKLTNYNSLADAVELFKTKKHILVLTGAGVSVSCGIPDFRSKDGIYARLRSEFPDLPDPTAMFDIRYFRENPAPFYNFAREIFPGQFVPSVSHRFIKELETSGRLLRNYTQNIDTLEHQTGIKRVVECHGSFSKCTCTRCGQKYDGNEIREEVLAMRVAHCKRCEGVIKPNIVFFGEDLGREFHQHVTEDKHKVDLIVVIGSSLKVRPVALIPHCVDKNVPQILINRESLPHYNADIELLGNCDDIIRDICFSLGGSFTELITSYDSIMEQQGKTKSQKPSQNKRQLISQEDFLNICMKEKRNDDSSDEPTLKKPRMSVADDSMDSEKNNFQEIQKHKSEDDDDTRNSDDILKKIKHPRLLSITEMLHDNKCVAISAHQTVFPGAECSFDLETLKLVRDVHHETHCESSCGSSCSSNADSEANQLSRAQSLDDFVLSDEDRKNTIHLDLQRADSCDGDFQYELSETIDPETFSHLCEEMRI.

Positions 1-68 (MSRDSGNDSE…SVSSESWQNN (68 aa)) are disordered. A compositionally biased stretch (low complexity) spans 55-64 (ESTTSVSSES). In terms of domain architecture, Deacetylase sirtuin-type spans 128 to 401 (KLTNYNSLAD…DSIMEQQGKT (274 aa)). Residues 153 to 172 (GAGVSVSCGIPDFRSKDGIY) and 237 to 240 (QNID) each bind NAD(+). Residue histidine 255 is the Proton acceptor of the active site. Cysteine 263, cysteine 266, cysteine 287, and cysteine 290 together coordinate Zn(2+). NAD(+) is bound by residues 327 to 329 (GSS), 352 to 354 (NRE), and cysteine 369. Positions 426 to 453 (EKRNDDSSDEPTLKKPRMSVADDSMDSE) are disordered.

The protein belongs to the sirtuin family. Class I subfamily. Interacts with ftt-2 and par-5. Interacts with daf-16 following heat-shock, which causes daf-16 to accumulate in the nucleus. Interaction with daf-16 is promoted by ftt-2. Interacts with transcriptional coregulator hcf-1. Requires Zn(2+) as cofactor.

Its subcellular location is the nucleus. The protein localises to the cytoplasm. It catalyses the reaction N(6)-acetyl-L-lysyl-[protein] + NAD(+) + H2O = 2''-O-acetyl-ADP-D-ribose + nicotinamide + L-lysyl-[protein]. In terms of biological role, NAD-dependent deacetylase. Involved in metabolism, apoptosis, response to oxidative stress, response to DNA damage, and determination of lifespan. Required for a reduction of the 'Lys-16' acetylation of histone H4 (H4K16ac) on dosage-compensated X chromosomes in hermaphrodites. Plays a role in germ cell and somatic cell apoptosis in response to DNA damage. Functions upstream of daf-16/Forkhead box protein O in the Insulin/IGF-1-like signaling (IIS) mediated pathway, promoting daf-16 mediated transcriptional activation and increased lifespan. May also regulate lifespan independently of daf-16 by modulating the transcription of genes involved in the stress response of the endoplasmic reticulum (ER). Functions upstream of transcriptional coregulator hcf-1, perhaps acting independently of the IIS mediated pathway, to modulate lifespan and oxidative stress response. Acts upstream of the nicotinic acid metabolism pathway, which may be linked to the regulation of longevity. Plays a role in ascaroside-mediated longevity and stress resistance. The chain is NAD-dependent protein deacetylase sir-2.1 from Caenorhabditis elegans.